The primary structure comprises 517 residues: Retinal dehydrogenase 2 (517 aa).

NAD(+) is bound by residues 184–186 (IPW), 210–213 (KPAE), and 264–266 (STE). Residue Glu-286 is the Proton acceptor of the active site. Catalysis depends on Cys-320, which acts as the Nucleophile. Residues 366–370 (KQYNK) and Glu-417 contribute to the NAD(+) site.

The protein belongs to the aldehyde dehydrogenase family. Homotetramer. Expressed in the high vocal center (HVC) which integrates auditory and motor activities and constitutes a nodal nucleus on the song system.

The protein localises to the cytoplasm. It catalyses the reaction retinal + NAD(+) + H2O = retinoate + NADH + 2 H(+). It carries out the reaction all-trans-retinal + NAD(+) + H2O = all-trans-retinoate + NADH + 2 H(+). The enzyme catalyses all-trans-13,14-dihydroretinal + NAD(+) + H2O = all-trans-13,14-dihydroretinoate + NADH + 2 H(+). It functions in the pathway cofactor metabolism; retinol metabolism. Catalyzes the NAD-dependent oxidation of aldehyde substrates, such as all-trans-retinal and all-trans-13,14-dihydroretinal, to their corresponding carboxylic acids, all-trans-retinoate and all-trans-13,14-dihydroretinoate, respectively. Retinoate signaling is critical for the transcriptional control of many genes, for instance it is crucial for initiation of meiosis in both male and female. Recognizes retinal as substrate, both in its free form and when bound to cellular retinol-binding protein. Lacks activity with benzaldehyde, acetaldehyde and octanal. Displays complete lack of activity with citral. Plays a significant role in the acquisition and production of learned songs. The polypeptide is Retinal dehydrogenase 2 (ALDH1A2) (Taeniopygia guttata (Zebra finch)).